Reading from the N-terminus, the 476-residue chain is Protein transport protein Sec61 subunit alpha (476 aa).

Residues 2–33 lie on the Cytoplasmic side of the membrane; that stretch reads GIKFLEFIKPFCAVLPEIQKPERKIQFREKVL. The helical transmembrane segment at 34-53 threads the bilayer; that stretch reads WTAITLFIFLVCCQIPLFGI. Residues 54-76 are Lumenal-facing; it reads MSSDSADPFYWMRVILASNRGTL. Residues 77–96 traverse the membrane as a helical segment; sequence MELGISPIVTSGLIMQLLAG. The Cytoplasmic portion of the chain corresponds to 97 to 117; it reads AKIIEVGDTPKDRALFNGAQK. The chain crosses the membrane as a helical span at residues 118-138; the sequence is LFGMIITIGQAIVYVMTGMYG. The Lumenal portion of the chain corresponds to 139 to 144; it reads DPSEMG. Residues 145–165 form a helical membrane-spanning segment; the sequence is AGICLLIIIQLFVAGLIVLLL. Topologically, residues 166-172 are cytoplasmic; that stretch reads DELLQKG. A helical membrane pass occupies residues 173 to 193; that stretch reads YGLGSGISLFIATNICETIVW. The Lumenal portion of the chain corresponds to 194–240; sequence KAFSPTTVNTGRGTEFEGAIIALFHLLATRTDKVRALREAFYRQNLP. A helical membrane pass occupies residues 241-261; that stretch reads NILNLIATVFVFAVVIYFQGF. Residues 262-288 are Cytoplasmic-facing; it reads RVDLPIKSARYRGQYNTYPIKLFYTSN. A helical membrane pass occupies residues 289-309; the sequence is IPIILQSALVSNLYVISQMLS. Topologically, residues 310–354 are lumenal; it reads TRFSGNFLVNLLGTWSDATSGGPARAYPVAGLCYYLSPPESFGSV. Residues 355–375 traverse the membrane as a helical segment; the sequence is LDDPVHAAIYIVFMLGSCAFF. The Cytoplasmic portion of the chain corresponds to 376–420; sequence SKTWIEVSGSSAKDVAKQLKEQQMVMRGHRETSMVHELNRYIPTA. A helical membrane pass occupies residues 421 to 441; the sequence is AAFGGLCIGGLSVMADFLGAI. Residues 442–445 lie on the Lumenal side of the membrane; it reads GSGT. Residues 446–462 traverse the membrane as a helical segment; it reads GILLAVTIIYQYFEIFV. At 463–476 the chain is on the cytoplasmic side; the sequence is KEQSEMGSMGALLF.

This sequence belongs to the SecY/SEC61-alpha family. As to quaternary structure, the SEC61 channel-forming translocon complex consists of channel-forming core components SEC61A1, SEC61B and SEC61G and different auxiliary components such as SEC62 and SEC63. The SEC61 channel associates with the multi-pass translocon (MPT) complex.

It localises to the endoplasmic reticulum membrane. In terms of biological role, component of SEC61 channel-forming translocon complex that mediates transport of signal peptide-containing precursor polypeptides across the endoplasmic reticulum (ER). Forms a ribosome receptor and a gated pore in the ER membrane, both functions required for cotranslational translocation of nascent polypeptides. May cooperate with auxiliary protein SEC62, SEC63 and HSPA5/BiP to enable post-translational transport of small presecretory proteins. The SEC61 channel is also involved in ER membrane insertion of transmembrane proteins: it mediates membrane insertion of the first few transmembrane segments of proteins, while insertion of subsequent transmembrane regions of multi-pass membrane proteins is mediated by the multi-pass translocon (MPT) complex. This Notothenia angustata (Rockcod) protein is Protein transport protein Sec61 subunit alpha (sec61a).